Reading from the N-terminus, the 717-residue chain is MDMQNITDLYKIDKKTTLYPNIINKYNYMAYLLFPNNATIFNSYITKKEVFEYPMQFAIALYPVYKLYWHNINICLNNRFIYLSNEFKNNISINTVYNLLYNNELKFEDDNIIINGKNLKISYSAYSYVTIISQITINISSLNKYQIYGIIESANYLGILSSYKQNKYFDKNLFSFTKSELRSTMIDVQLKIFEIFISKKNCIISGGTGIGKTTVIPKLFWWFNLLFDGYEFWNTSNENKNINDFIFKPNFEKNKTILSLPRKALIRQMGINYIKSLGFDNISGSPIILKYKDVKKEKEYYNNNPILYPFVLSVNRITINNIKHSNSVIIDEIHEHDKFGDIAIAIARTKKKKYNIRNIVLISATIESDIDNIRIYFKNIVEIYIPGVSLFPVKEIECEDKDVISILKNYMPSVGKSVIIFYETIKKINEYKEILESILIDKIYKIYTIHSKITNINAIINKLQNDKKHIHIILSTNYLESSITITNATLVIDNGKMYQKKFLTGSTMYITESMYIQRKGRVGRISKGTYIRTYSKDLLQTTFKHINYQYLWEYILVFKYNNMDYYNDLFIKPDDPSRIENTLNYLKNINIDIDKYISLLYSKFNKYEINMVEYLSIYINNSTSDIILLNEFIDNIRNSDKYIFPYRLTEIFHKLNVRCRCINITETEEGNINCSFVILNNYDGDPFFKLSFEKSNLICRYNKIYYIVSMSPLYLID.

Residues 193-384 (FEIFISKKNC…IYFKNIVEIY (192 aa)) enclose the Helicase ATP-binding domain. Position 206–213 (206–213 (GGTGIGKT)) interacts with ATP. A DEXH box motif is present at residues 331–334 (DEIH). In terms of domain architecture, Helicase C-terminal spans 406 to 566 (ILKNYMPSVG…VFKYNNMDYY (161 aa)).

Belongs to the DEAD box helicase family. DEAH subfamily. Monomer.

Its subcellular location is the virion. It catalyses the reaction ATP + H2O = ADP + phosphate + H(+). NTP-dependent helicase that catalyzes unidirectional unwinding of 3'tailed duplex RNAs and plays an important role during transcription of early mRNAs, presumably by preventing R-loop formation behind the elongating RNA polymerase. Might also play a role in the export of newly synthesized mRNA chains out of the core into the cytoplasm. Required for replication and propagation of viral particles. The chain is RNA helicase NPH-II (NPH2) from Melanoplus sanguinipes (Migratory grasshopper).